The following is a 195-amino-acid chain: MPKLGMQSIRRRQLIDATLEAINEVGMHDATIAQIARRAGVSTGIISHYFRDKNGLLEATMRDITSQLRDAVLNRLHALPQGSAERRLQAIVGGNFDETQVSSAAMKAWLAFWASSMHQPMLYRLQQVSSRRLLSNLVSEFRRELPRQQAQEAGYGLAALIDGLWLRAALSGKPLDKPLAHSLTRHFITQHLPTD.

One can recognise an HTH tetR-type domain in the interval 8–68; that stretch reads SIRRRQLIDA…ATMRDITSQL (61 aa). The H-T-H motif DNA-binding region spans 31 to 50; the sequence is TIAQIARRAGVSTGIISHYF.

It functions in the pathway amine and polyamine biosynthesis; betaine biosynthesis via choline pathway [regulation]. Repressor involved in the biosynthesis of the osmoprotectant glycine betaine. It represses transcription of the choline transporter BetT and the genes of BetAB involved in the synthesis of glycine betaine. This Escherichia coli O127:H6 (strain E2348/69 / EPEC) protein is HTH-type transcriptional regulator BetI.